A 117-amino-acid polypeptide reads, in one-letter code: Probable glycerol dehydratase-reactivating factor small subunit (117 aa).

Residue E31 participates in Mg(2+) binding.

Belongs to the DdrB/PduH family. In terms of assembly, member of the GDR complex, probably composed of DhaF(2)/DhaG(2). It depends on Mg(2+) as a cofactor.

Its function is as follows. Small subunit of the glycerol dehydratase-reactivating factor (GDR), which reactivates suicidally inhibited adenosylcobalamin-dependent glycerol dehydratase. In Citrobacter freundii, this protein is Probable glycerol dehydratase-reactivating factor small subunit.